We begin with the raw amino-acid sequence, 419 residues long: Peroxisome biogenesis factor 10 (419 aa).

Topologically, residues 1-27 (MPPSEEIKLRAVSPRPDFKANYLEFAN) are peroxisomal matrix. Residues 28–57 (APAIVRANQKDSYFETVLRDKLQNVIQIFK) traverse the membrane as a helical segment. Gly58 is a topological domain (cytoplasmic). The chain crosses the membrane as a helical span at residues 59-80 (QRFTHTHPEEIGVAAKALYLSL). Residues 81–108 (TTLLGTKTLGEEYVDLIYVSRDGKRIPR) lie on the Peroxisomal matrix side of the membrane. The chain crosses the membrane as a helical span at residues 109 to 141 (YLARAGFIFAYAILPYFLTRLFRRLKSSSTPKD). Residues 142-158 (EVTEEKINKELPISLRI) are Cytoplasmic-facing. Residues 159–185 (EKYLSNMSYSKVLDTIMNLHIAVFYFS) form a helical membrane-spanning segment. Residues 186 to 215 (GQFYNISKRFFSMRYAFGHKINKERTPNGN) lie on the Peroxisomal matrix side of the membrane. The helical transmembrane segment at 216-235 (YELLGGLIVLQLVMKSLGGF) threads the bilayer. Residues 236-419 (KGLIGSFTGN…RTLGYFLVVF (184 aa)) are Cytoplasmic-facing. Cys298, Cys301, Cys313, His315, Cys318, Cys321, Cys334, and Cys347 together coordinate Zn(2+). The RING-type zinc finger occupies 298-360 (CMLCLSYMTN…FYIPTLNKIC (63 aa)).

This sequence belongs to the pex2/pex10/pex12 family. In terms of assembly, component of the peroxisomal translocation complex, composed of at least PEX3, PEX2, PEX10 and PEX12. Interacts with PEX19.

It is found in the peroxisome membrane. It carries out the reaction S-ubiquitinyl-[E2 ubiquitin-conjugating enzyme]-L-cysteine + [acceptor protein]-L-lysine = [E2 ubiquitin-conjugating enzyme]-L-cysteine + N(6)-ubiquitinyl-[acceptor protein]-L-lysine.. Its pathway is protein modification; protein ubiquitination. Its activity is regulated as follows. The E3 ubiquitin-protein ligase activity is stimulated by PEX12. In terms of biological role, E3 ubiquitin-protein ligase component of the peroxisomal translocation complex. The two types of peroxisomal matrix targeting signals, PTS1 and PTS2, are first recognized in the cytosol by their receptors PEX5 and PEX7, respectively, which then carry the cargo to the peroxisomal membrane. The peroxisomal targeting signal (PTS) receptor-cargo complexes interact with peroxisomal membrane protein (PMP) components of the docking complex. They have then additional downstream interactions with the translocation complex, leading to the transport of fully folded and oligomerized cargo into the peroxisome matrix. The peroxisomal translocation complex forms the retrotranslocation channel with each subunit contributing transmembrane segments that coassemble into an open channel that specifically allows the passage of PEX5 and PEX20 through the peroxisomal membrane. Specifically catalyzes monoubiquitination of PEX5 and/or PEX20 at 'Cys-6' and 'Cys-8', respectively, a modification that acts as a signal for PEX5 or PEX20 export from peroxisomes to the cytosol, thereby promoting PEX5 and PEX20 recycling. This is Peroxisome biogenesis factor 10 from Komagataella pastoris (Yeast).